A 23-amino-acid chain; its full sequence is Basic phospholipase A2 CB1 (23 aa).

As to quaternary structure, heterodimer of an acidic subunit and a basic chain. The acidic subunit is non-toxic, without enzymatic activity and comprises 3 peptides that are cross-linked by 7 disulfide bridges. The basic subunit is toxic, has phospholipase A2 activity and is composed of a single chain. Ca(2+) serves as cofactor. Contains 7 disulfide bonds. As to expression, expressed by the venom gland.

It localises to the secreted. The enzyme catalyses a 1,2-diacyl-sn-glycero-3-phosphocholine + H2O = a 1-acyl-sn-glycero-3-phosphocholine + a fatty acid + H(+). Functionally, snake venom phospholipase A2 (PLA2) that shows presynaptic neurotoxicity. PLA2 catalyzes the calcium-dependent hydrolysis of the 2-acyl groups in 3-sn-phosphoglycerides. This Crotalus basiliscus (Mexican west-coast rattlesnake) protein is Basic phospholipase A2 CB1.